Consider the following 2440-residue polypeptide: Nuclear receptor corepressor 1 (2440 aa).

The segment covering 1–18 (MSSSGYPPNQGAFSTEQS) has biased composition (polar residues). 2 disordered regions span residues 1–177 (MSSS…SKLS) and 206–231 (QQQLEEEAAKPPEPEKPVSPPPVEQK). The interaction with ZBTB33 and HEXIM1 stretch occupies residues 1-373 (MSSSGYPPNQ…QRGAGLSATI (373 aa)). The span at 51–64 (SQASQLLQQQQQQQ) shows a compositional bias: low complexity. Basic and acidic residues-rich tracts occupy residues 77 to 88 (PGSDRPQERRTS), 99 to 119 (VDHDSLESKRPRLEQVSDSHF), and 141 to 155 (ADAKKDPAFGGKHEA). Phosphoserine is present on Ser-172. Positions 174-216 (SKLSKEELIQSMDRVDREIAKVEQQILKLKKKQQQLEEEAAKP) form a coiled coil. Over residues 212-221 (EAAKPPEPEK) the composition is skewed to basic and acidic residues. Ser-224 is subject to Phosphoserine. The tract at residues 254–312 (FEGLGPKVELPLYNQPSDTKVYHENIKTNQVMRKKLILFFKRRNHARKQREQKICQRYD) is interaction with SIN3A/B. The stretch at 299 to 328 (ARKQREQKICQRYDQLMEAWEKKVDRIENN) forms a coiled coil. The region spanning 435-486 (QFMNVWTDHEKEIFKDKFIQHPKNFGLIASYLERKSVPDCVLYYYLTKKNEN) is the SANT 1 domain. Disordered stretches follow at residues 497-632 (KRRG…TEEE) and 677-915 (NLLQ…GSIL). Residues 501–557 (RNQQIARPSQEEKVEEKEEDKAEKTEKKEEEKKDEEEKDEKEDSKENTKEKDKIDGT) adopt a coiled-coil conformation. Basic and acidic residues-rich tracts occupy residues 509 to 531 (SQEEKVEEKEEDKAEKTEKKEEE) and 541 to 556 (KEDSKENTKEKDKIDG). A compositionally biased stretch (low complexity) spans 592–605 (EAAAASAAAAAATE). The span at 606 to 617 (EPPPPLPPPPEP) shows a compositional bias: pro residues. Residues 623-674 (VETSRWTEEEMEVAKKGLVEHGRNWAAIAKMVGTKSEAQCKNFYFNYKRRHN) form the SANT 2 domain. The span at 698–708 (QCESVASTVSA) shows a compositional bias: polar residues. The segment covering 709 to 728 (QEDEDIEASNEEENPEDSEV) has biased composition (acidic residues). Low complexity predominate over residues 752–768 (ELEPTTETAPSTSPSLA). Polar residues predominate over residues 781–792 (ETQVNDSISAET). Positions 820-859 (DSVDVEVRVPENHASKVEGDNTKERDLDRASEKVEPRDED) are enriched in basic and acidic residues. Polar residues-rich tracts occupy residues 864–883 (QQINAQRPEPQSDNDSSATC) and 906–915 (SLLNPTGSIL). The interaction with ETO stretch occupies residues 988 to 1816 (RSSTSPCGTS…QGLPASRYNT (829 aa)). Position 999 is a phosphoserine (Ser-999). Positions 1022–1046 (VRLPTTRPTRPPPPLIPSSKTTVAS) are disordered. Residue Lys-1106 forms a Glycyl lysine isopeptide (Lys-Gly) (interchain with G-Cter in SUMO1); alternate linkage. A Glycyl lysine isopeptide (Lys-Gly) (interchain with G-Cter in SUMO2); alternate cross-link involves residue Lys-1106. The residue at position 1111 (Ser-1111) is a Phosphoserine. Lys-1184 is covalently cross-linked (Glycyl lysine isopeptide (Lys-Gly) (interchain with G-Cter in SUMO2)). Residues 1184 to 1204 (KGSISRMPIEDSSPEKGREEA) are disordered. Phosphoserine occurs at positions 1195, 1196, 1249, 1263, 1281, and 1322. The residue at position 1336 (Lys-1336) is an N6-acetyllysine. Residue Thr-1367 is modified to Phosphothreonine. Residue Lys-1389 forms a Glycyl lysine isopeptide (Lys-Gly) (interchain with G-Cter in SUMO2) linkage. Lys-1412 participates in a covalent cross-link: Glycyl lysine isopeptide (Lys-Gly) (interchain with G-Cter in SUMO2); alternate. Lys-1412 is modified (N6-acetyllysine; alternate). The disordered stretch occupies residues 1440–1459 (AGETVRSRHTSVVSSGPSVL). Residues Ser-1450 and Ser-1472 each carry the phosphoserine modification. Over residues 1488–1512 (YQNTMSRGSPMMNRTSDVTISSNKS) the composition is skewed to polar residues. A disordered region spans residues 1488–1554 (YQNTMSRGSP…SPFDPHHRGS (67 aa)). Positions 1501 to 2440 (RTSDVTISSN…QYETLSDSDD (940 aa)) are interaction with C1D. A Glycyl lysine isopeptide (Lys-Gly) (interchain with G-Cter in SUMO2) cross-link involves residue Lys-1518. Ser-1592 carries the post-translational modification Phosphoserine. Disordered stretches follow at residues 1690-1759 (PRPY…SPSP) and 1884-1922 (SSAFPSGKPQPHSSVVYSEAGKDKGPPPKSRYEEELRTR). Basic and acidic residues-rich tracts occupy residues 1712 to 1729 (AEREREREREKERERERI) and 1903 to 1921 (AGKDKGPPPKSRYEEELRT). The CORNR box 1 signature appears at 1933-1937 (IDVII). Residues 1943 to 1969 (SDKDARERGSQSSDSSSSLSSHRYETP) are disordered. Residues 1952–1963 (SQSSDSSSSLSS) show a composition bias toward low complexity. 2 positions are modified to phosphoserine: Ser-1977 and Ser-1981. The disordered stretch occupies residues 2006-2041 (PTRQYEGPLHHYRPQQESPSPQQQLPPSSQAEGMGQ). Low complexity predominate over residues 2020–2035 (QQESPSPQQQLPPSSQ). Residues 2032 to 2115 (PSSQAEGMGQ…QAQSVHHQRP (84 aa)) are ID1. Residues 2047–2050 (RLIT) are required for interaction with RARA in the absence of its ligand. A CORNR box 2 motif is present at residues 2055-2059 (ICQII). Over residues 2067–2086 (QVSSQTPQQPPTSTFQNSPS) the composition is skewed to low complexity. Residues 2067-2155 (QVSSQTPQQP…PYEPISPPQV (89 aa)) form a disordered region. The segment covering 2087–2110 (ALVSTPVRTKTSNRYSPESQAQSV) has biased composition (polar residues). A phosphoserine mark is found at Ser-2102, Ser-2120, Ser-2136, Ser-2151, and Ser-2184. The span at 2124-2142 (LVDKSRGSRPGKSPERSHV) shows a compositional bias: basic and acidic residues. Residues 2212–2273 (IFRKLNSSGG…EDIIRKALMG (62 aa)) are ID2. The CORNR box 3 signature appears at 2263–2267 (LEDII). Residues 2287-2440 (SQPMGVVPGT…QYETLSDSDD (154 aa)) are disordered. A compositionally biased stretch (polar residues) spans 2296-2305 (TANTSVVTSG). Thr-2399 bears the Phosphothreonine mark. Composition is skewed to polar residues over residues 2407-2418 (AVNQAAPHQQNR) and 2431-2440 (QYETLSDSDD). Residues Ser-2436 and Ser-2438 each carry the phosphoserine modification.

The protein belongs to the N-CoR nuclear receptor corepressors family. In terms of assembly, forms a large corepressor complex that contains SIN3A/B and histone deacetylases HDAC1 and HDAC2. This complex associates with the thyroid receptor (TR) and the retinoid acid receptor (RAR) in the absence of ligand. Interacts directly with RARA; the interaction is facilitated with RARA trimethylation. Component of the N-Cor repressor complex, at least composed of CBFA2T3, HEXIM1, NCOR1, NCOR2, HDAC3, TBL1X, TBL1XR1, CORO2A and GPS2. Interacts with ZBTB33; the interaction serves to recruit the N-CoR complex to promoter regions containing methylated CpG dinucleotides. Interacts with TRIM28 and KDM3A. Interacts (via the RD1 domain) with BAZ1A (via its N-terminal); the interaction corepresses a number of NCOR1-regulated genes. Interacts with BCL6, C1D, DACH1, HEXIM1, HDAC7, RORA, RORC, SAP30, SIAH2, SIN3A and SIN3B. May interact with DEAF1. Interacts with RXRA. Interacts with SETD5. Interacts with VDR. Interacts with ZBTB7A. Interacts with AR. Interacts with HDAC3. Post-translationally, ubiquitinated; mediated by SIAH2 and leading to its subsequent proteasomal degradation.

It localises to the nucleus. Functionally, mediates transcriptional repression by certain nuclear receptors. Part of a complex which promotes histone deacetylation and the formation of repressive chromatin structures which may impede the access of basal transcription factors. Participates in the transcriptional repressor activity produced by BCL6. Recruited by ZBTB7A to the androgen response elements/ARE on target genes, negatively regulates androgen receptor signaling and androgen-induced cell proliferation. Mediates the NR1D1-dependent repression and circadian regulation of TSHB expression. The NCOR1-HDAC3 complex regulates the circadian expression of the core clock gene ARTNL/BMAL1 and the genes involved in lipid metabolism in the liver. The sequence is that of Nuclear receptor corepressor 1 (NCOR1) from Homo sapiens (Human).